A 387-amino-acid chain; its full sequence is BTB and MATH domain-containing protein 38 (387 aa).

The MATH domain occupies 79–204 (EGMLKLEIPN…NEMVTVTARV (126 aa)). In terms of domain architecture, BTB spans 228-295 (CDMTLVINKQ…IYPCHKPITS (68 aa)).

This chain is BTB and MATH domain-containing protein 38 (bath-38), found in Caenorhabditis elegans.